A 153-amino-acid polypeptide reads, in one-letter code: Large ribosomal subunit protein uL13 (153 aa).

It belongs to the universal ribosomal protein uL13 family. Part of the 50S ribosomal subunit.

Its function is as follows. This protein is one of the early assembly proteins of the 50S ribosomal subunit, although it is not seen to bind rRNA by itself. It is important during the early stages of 50S assembly. The protein is Large ribosomal subunit protein uL13 of Azorhizobium caulinodans (strain ATCC 43989 / DSM 5975 / JCM 20966 / LMG 6465 / NBRC 14845 / NCIMB 13405 / ORS 571).